The following is a 249-amino-acid chain: MEGSSKGLRKGAWTAEEDSLLRLCIDKYGEGKWHQVPLRAGLNRCRKSCRLRWLNYLKPSIKRGRLSNDEVDLLLRLHKLLGNRWSLIAGRLPGRTANDVKNYWNTHLSKKHESSCCKSKMKKKNIISPPTTPVQKIGVFKPRPRSFSVNNGCSHLNGLPEVDLIPSCLGLKKNNVCENSITCNKDDEKDDFVNNLMNGDNMWLENLLGENQEADAIVPEATTAEHGATLAFDVEQLWSLFDGETVELD.

HTH myb-type domains follow at residues 5–57 (SKGL…LNYL) and 58–112 (KPSI…SKKH). 2 consecutive DNA-binding regions (H-T-H motif) follow at residues 33–57 (WHQVPLRAGLNRCRKSCRLRWLNYL) and 85–108 (WSLIAGRLPGRTANDVKNYWNTHL).

Interacts with BHLH12/MYC1, BHLH1/GL3/MYC6, BHLH2/EGL3/MYC146, and BHLH42/TT8. As to expression, expressed only in leaves and siliques.

Its subcellular location is the nucleus. In terms of biological role, transcription activator, when associated with BHLH12/MYC1, EGL3, or GL3. Promotes the synthesis of phenylpropanoid-derived compounds such as anthocyanins. This chain is Transcription factor MYB90 (MYB90), found in Arabidopsis thaliana (Mouse-ear cress).